We begin with the raw amino-acid sequence, 26 residues long: Muscarinic toxin-like protein 1 (26 aa).

The protein belongs to the three-finger toxin family. Short-chain subfamily. Orphan group VIII (haditoxin) sub-subfamily. Homodimer; non-covalently linked. As to expression, expressed by the venom gland.

Its subcellular location is the secreted. Its function is as follows. Antagonist of muscle and neuronal nicotinic acetylcholine receptors (nAChR) with highest affinity for neuronal alpha-7/CHRNA7 nAChRs. The chain is Muscarinic toxin-like protein 1 from Naja naja (Indian cobra).